The primary structure comprises 229 residues: Protein 33K (229 aa).

The tract at residues 1–157 is disordered; sequence MAPKKKLQLP…GALRLAPNEP (157 aa). A compositionally biased stretch (acidic residues) spans 14-54; the sequence is TDEEEYWDSQAEEVLDEEEEDMMEDWESLDEEASEVEEVSD. 3 stretches are compositionally biased toward low complexity: residues 55-64, 71-82, and 100-122; these read ETPSPSVAFP, SATGSSMATTSA, and TTGT…AAAT. The segment at 172-199 is necessary for nuclear subcellular location; the sequence is YAIFQQSRGQEQELKIKNRSLRSLTRSC. The interval 178–198 is RS-repeat; required for splicing enhancer activity; that stretch reads SRGQEQELKIKNRSLRSLTRS.

This sequence belongs to the adenoviridae splicing factor family. Homooligomer. Interacts with DBP; this interaction occurs at a unique vertex during genome packaging. Interacts with IVa2; this interaction occurs at a unique vertex during genome packaging and seems to potentiate IVa2 and 33K oligomerization. Phosphorylated in vitro by human PKA and PRKDC. PRKDC inhibits, whereas PKA activates the splicing factor.

Its subcellular location is the host nucleus. Functionally, promotes alternative splicing of late transcripts by promoting splicing at weak 3' splice sites. Required for the temporal activation of major late pre-mRNA splicing at late times of infection. Induces the splicing and expression of the late capsid vertex protein. Probably functions as the small terminase that is part of the molecular motor that translocates genomic DNA in empty capsid during DNA packaging. This motor is located at a unique vertex and comprises at least the IVa2 ATPase, the small terminase 33K and probably a portal. Forms a ring-like structure of about 17 nm in which genomic DNA is translocated into the capsid. Stimulates IVa2 ATPase activity in the presence of the viral genome. Once the DNA is packaged, the terminase detaches: the 33K protein is present in the empty particles, but not in the mature virions. Also involved in virion assembly. The polypeptide is Protein 33K (Homo sapiens (Human)).